An 86-amino-acid chain; its full sequence is Exodeoxyribonuclease 7 small subunit (86 aa).

It belongs to the XseB family. In terms of assembly, heterooligomer composed of large and small subunits.

It is found in the cytoplasm. The enzyme catalyses Exonucleolytic cleavage in either 5'- to 3'- or 3'- to 5'-direction to yield nucleoside 5'-phosphates.. In terms of biological role, bidirectionally degrades single-stranded DNA into large acid-insoluble oligonucleotides, which are then degraded further into small acid-soluble oligonucleotides. The polypeptide is Exodeoxyribonuclease 7 small subunit (Agrobacterium fabrum (strain C58 / ATCC 33970) (Agrobacterium tumefaciens (strain C58))).